Reading from the N-terminus, the 160-residue chain is Cyanate hydratase (160 aa).

Catalysis depends on residues R100, E103, and S126.

Belongs to the cyanase family.

It catalyses the reaction cyanate + hydrogencarbonate + 3 H(+) = NH4(+) + 2 CO2. Its function is as follows. Catalyzes the reaction of cyanate with bicarbonate to produce ammonia and carbon dioxide. This chain is Cyanate hydratase, found in Aspergillus oryzae (strain ATCC 42149 / RIB 40) (Yellow koji mold).